The primary structure comprises 234 residues: Isoprenyl transferase (234 aa).

The active site involves Asp13. Asp13 serves as a coordination point for Mg(2+). Substrate-binding positions include 14 to 17, Trp18, Arg26, His30, and 58 to 60; these read GNGR and STE. The active-site Proton acceptor is the Asn61. Substrate is bound by residues Trp62, Arg64, Arg180, and 186 to 188; that span reads RLS. Glu199 contacts Mg(2+).

It belongs to the UPP synthase family. In terms of assembly, homodimer. Mg(2+) is required as a cofactor.

Functionally, catalyzes the condensation of isopentenyl diphosphate (IPP) with allylic pyrophosphates generating different type of terpenoids. In Helicobacter pylori (strain J99 / ATCC 700824) (Campylobacter pylori J99), this protein is Isoprenyl transferase.